The following is a 254-amino-acid chain: Imidazole glycerol phosphate synthase subunit HisF (254 aa).

Residues Asp-11 and Asp-130 contribute to the active site.

Belongs to the HisA/HisF family. Heterodimer of HisH and HisF.

Its subcellular location is the cytoplasm. The enzyme catalyses 5-[(5-phospho-1-deoxy-D-ribulos-1-ylimino)methylamino]-1-(5-phospho-beta-D-ribosyl)imidazole-4-carboxamide + L-glutamine = D-erythro-1-(imidazol-4-yl)glycerol 3-phosphate + 5-amino-1-(5-phospho-beta-D-ribosyl)imidazole-4-carboxamide + L-glutamate + H(+). It functions in the pathway amino-acid biosynthesis; L-histidine biosynthesis; L-histidine from 5-phospho-alpha-D-ribose 1-diphosphate: step 5/9. IGPS catalyzes the conversion of PRFAR and glutamine to IGP, AICAR and glutamate. The HisF subunit catalyzes the cyclization activity that produces IGP and AICAR from PRFAR using the ammonia provided by the HisH subunit. This chain is Imidazole glycerol phosphate synthase subunit HisF, found in Oceanobacillus iheyensis (strain DSM 14371 / CIP 107618 / JCM 11309 / KCTC 3954 / HTE831).